The chain runs to 1178 residues: F-box/WD repeat-containing protein A-like protein (1178 aa).

The region spanning 1–208 (MQYVNGMDIV…TLPNLIKYIK (208 aa)) is the START domain. Disordered regions lie at residues 223–296 (KTPD…NLNE), 569–594 (SLII…DNGI), and 618–649 (SSSS…STFS). Composition is skewed to low complexity over residues 229 to 293 (NPNL…SNEN) and 571 to 580 (IINSPPNSNN). The F-box domain maps to 717–763 (CSLFDLLPYEMIQYIFTLMDATHLIRMSRTCKYFNRICLDDNIWRDL). The interval 804–841 (KKSNNSSPLSASSSSSSPSPPLLPPPPPPIPQLPDMLL) is disordered. Positions 809 to 820 (SSPLSASSSSSS) are enriched in low complexity. Over residues 821–835 (PSPPLLPPPPPPIPQ) the composition is skewed to pro residues. WD repeat units follow at residues 886 to 923 (GHKG…CEST), 925 to 979 (RCGA…IEKE), 981 to 1017 (RFLY…ELQM), 1020 to 1059 (IENT…TELV), 1062 to 1100 (GHKG…SAIH), 1104 to 1141 (SHSS…EPNL), and 1146 to 1178 (NNLS…FNSK).

In terms of biological role, substrate recognition component of a SCF (SKP1-CUL1-F-box protein) E3 ubiquitin-protein ligase complex which mediates the ubiquitination and subsequent proteasomal degradation of target proteins. The protein is F-box/WD repeat-containing protein A-like protein of Dictyostelium discoideum (Social amoeba).